The primary structure comprises 153 residues: 6,7-dimethyl-8-ribityllumazine synthase (153 aa).

5-amino-6-(D-ribitylamino)uracil contacts are provided by residues phenylalanine 22, alanine 56–glutamate 58, and alanine 80–isoleucine 82. Serine 85–threonine 86 lines the (2S)-2-hydroxy-3-oxobutyl phosphate pocket. The active-site Proton donor is the histidine 88. Phenylalanine 113 serves as a coordination point for 5-amino-6-(D-ribitylamino)uracil. Position 127 (arginine 127) interacts with (2S)-2-hydroxy-3-oxobutyl phosphate.

Belongs to the DMRL synthase family.

The enzyme catalyses (2S)-2-hydroxy-3-oxobutyl phosphate + 5-amino-6-(D-ribitylamino)uracil = 6,7-dimethyl-8-(1-D-ribityl)lumazine + phosphate + 2 H2O + H(+). It functions in the pathway cofactor biosynthesis; riboflavin biosynthesis; riboflavin from 2-hydroxy-3-oxobutyl phosphate and 5-amino-6-(D-ribitylamino)uracil: step 1/2. In terms of biological role, catalyzes the formation of 6,7-dimethyl-8-ribityllumazine by condensation of 5-amino-6-(D-ribitylamino)uracil with 3,4-dihydroxy-2-butanone 4-phosphate. This is the penultimate step in the biosynthesis of riboflavin. The sequence is that of 6,7-dimethyl-8-ribityllumazine synthase from Clostridium novyi (strain NT).